The sequence spans 451 residues: 1,3-beta-glucanosyltransferase PGA4 (451 aa).

Positions 1–18 (MLFRSLVTYLSLVSSVLS) are cleaved as a signal peptide. Tyr-81 is a binding site for (1,3-beta-D-glucosyl)n. N-linked (GlcNAc...) asparagine glycosylation is present at Asn-88. Residues 108-116 (NTPHSSITR), Asn-151, Glu-152, and Arg-198 contribute to the (1,3-beta-D-glucosyl)n site. The Proton donor role is filled by Glu-152. N-linked (GlcNAc...) asparagine glycosylation occurs at Asn-245. The active-site Nucleophile is Glu-254. Tyr-286 contacts (1,3-beta-D-glucosyl)n. Positions 316-336 (SQFEKTKNPSGDGGYLKSTGG) are disordered. Asn-347, Asn-394, and Asn-422 each carry an N-linked (GlcNAc...) asparagine glycan. A disordered region spans residues 395–427 (YTSSITASSRASPSQTSQVSSSSATSANSTSSK). The span at 396 to 426 (TSSITASSRASPSQTSQVSSSSATSANSTSS) shows a compositional bias: low complexity. Asp-430 carries the GPI-anchor amidated aspartate lipid modification. Positions 431 to 451 (AAVEGAGFLSVIALAAGIALL) are cleaved as a propeptide — removed in mature form.

This sequence belongs to the glycosyl hydrolase 72 family. Post-translationally, the GPI-anchor is attached to the protein in the endoplasmic reticulum and serves to target the protein to the cell surface. There, the glucosamine-inositol phospholipid moiety is cleaved off and the GPI-modified mannoprotein is covalently attached via its lipidless GPI glycan remnant to the 1,6-beta-glucan of the outer cell wall layer.

It is found in the secreted. Its subcellular location is the cell wall. The protein resides in the membrane. Splits internally a 1,3-beta-glucan molecule and transfers the newly generated reducing end (the donor) to the non-reducing end of another 1,3-beta-glucan molecule (the acceptor) forming a 1,3-beta linkage, resulting in the elongation of 1,3-beta-glucan chains in the cell wall. Involved in cell wall biosynthesis and morphogenesis. Plays a key role in virulence. This is 1,3-beta-glucanosyltransferase PGA4 (PGA4) from Candida albicans (strain SC5314 / ATCC MYA-2876) (Yeast).